Here is a 239-residue protein sequence, read N- to C-terminus: Protein GrpE (239 aa).

Disordered stretches follow at residues 1 to 53 and 210 to 239; these read MIEE…EDLK and GPGQQISQESEEKDKVDKDIDSEGSISEEN. Basic and acidic residues-rich tracts occupy residues 34 to 53 and 219 to 230; these read NEDKKLPDDNNEKIDAEDLK and SEEKDKVDKDID.

Belongs to the GrpE family. In terms of assembly, homodimer.

The protein localises to the cytoplasm. In terms of biological role, participates actively in the response to hyperosmotic and heat shock by preventing the aggregation of stress-denatured proteins, in association with DnaK and GrpE. It is the nucleotide exchange factor for DnaK and may function as a thermosensor. Unfolded proteins bind initially to DnaJ; upon interaction with the DnaJ-bound protein, DnaK hydrolyzes its bound ATP, resulting in the formation of a stable complex. GrpE releases ADP from DnaK; ATP binding to DnaK triggers the release of the substrate protein, thus completing the reaction cycle. Several rounds of ATP-dependent interactions between DnaJ, DnaK and GrpE are required for fully efficient folding. This Prochlorococcus marinus (strain MIT 9515) protein is Protein GrpE.